A 382-amino-acid chain; its full sequence is D-galactonate dehydratase (382 aa).

Residue D183 participates in Mg(2+) binding. H185 functions as the Proton donor in the catalytic mechanism. Mg(2+) contacts are provided by E209 and E235. H285 serves as the catalytic Proton acceptor.

The protein belongs to the mandelate racemase/muconate lactonizing enzyme family. GalD subfamily. Requires Mg(2+) as cofactor.

The catalysed reaction is D-galactonate = 2-dehydro-3-deoxy-D-galactonate + H2O. The protein operates within carbohydrate acid metabolism; D-galactonate degradation; D-glyceraldehyde 3-phosphate and pyruvate from D-galactonate: step 1/3. Catalyzes the dehydration of D-galactonate to 2-keto-3-deoxy-D-galactonate. This chain is D-galactonate dehydratase, found in Pectobacterium atrosepticum (strain SCRI 1043 / ATCC BAA-672) (Erwinia carotovora subsp. atroseptica).